A 559-amino-acid polypeptide reads, in one-letter code: 2-isopropylmalate synthase (559 aa).

In terms of domain architecture, Pyruvate carboxyltransferase spans 33–307 (PIWCSSDLRD…NPDLDFSDID (275 aa)). Residues D42, H246, H248, and N282 each contribute to the Mg(2+) site. The tract at residues 439–559 (ANTPYALVSH…SLSQPEAKAA (121 aa)) is regulatory domain.

The protein belongs to the alpha-IPM synthase/homocitrate synthase family. LeuA type 2 subfamily. As to quaternary structure, homodimer. Mg(2+) serves as cofactor.

It is found in the cytoplasm. The catalysed reaction is 3-methyl-2-oxobutanoate + acetyl-CoA + H2O = (2S)-2-isopropylmalate + CoA + H(+). Its pathway is amino-acid biosynthesis; L-leucine biosynthesis; L-leucine from 3-methyl-2-oxobutanoate: step 1/4. Functionally, catalyzes the condensation of the acetyl group of acetyl-CoA with 3-methyl-2-oxobutanoate (2-ketoisovalerate) to form 3-carboxy-3-hydroxy-4-methylpentanoate (2-isopropylmalate). This chain is 2-isopropylmalate synthase, found in Pseudomonas fluorescens (strain Pf0-1).